Reading from the N-terminus, the 200-residue chain is ATP-dependent Clp protease proteolytic subunit (200 aa).

Residue serine 99 is the Nucleophile of the active site. Residue histidine 124 is part of the active site.

This sequence belongs to the peptidase S14 family. As to quaternary structure, fourteen ClpP subunits assemble into 2 heptameric rings which stack back to back to give a disk-like structure with a central cavity, resembling the structure of eukaryotic proteasomes.

It is found in the cytoplasm. It carries out the reaction Hydrolysis of proteins to small peptides in the presence of ATP and magnesium. alpha-casein is the usual test substrate. In the absence of ATP, only oligopeptides shorter than five residues are hydrolyzed (such as succinyl-Leu-Tyr-|-NHMec, and Leu-Tyr-Leu-|-Tyr-Trp, in which cleavage of the -Tyr-|-Leu- and -Tyr-|-Trp bonds also occurs).. Functionally, cleaves peptides in various proteins in a process that requires ATP hydrolysis. Has a chymotrypsin-like activity. Plays a major role in the degradation of misfolded proteins. The polypeptide is ATP-dependent Clp protease proteolytic subunit (Syntrophomonas wolfei subsp. wolfei (strain DSM 2245B / Goettingen)).